The chain runs to 223 residues: Ribonuclease T (223 aa).

One can recognise an Exonuclease domain in the interval 20–194 (VVIDVETAGF…YDTERTAELF (175 aa)). Mg(2+) is bound by residues Asp23, Glu25, His181, and Asp186. Residue His181 is the Proton donor/acceptor of the active site.

It belongs to the RNase T family. As to quaternary structure, homodimer. It depends on Mg(2+) as a cofactor.

Trims short 3' overhangs of a variety of RNA species, leaving a one or two nucleotide 3' overhang. Responsible for the end-turnover of tRNA: specifically removes the terminal AMP residue from uncharged tRNA (tRNA-C-C-A). Also appears to be involved in tRNA biosynthesis. The sequence is that of Ribonuclease T from Shewanella baltica (strain OS185).